Consider the following 307-residue polypeptide: Ribosomal RNA small subunit methyltransferase H (307 aa).

S-adenosyl-L-methionine contacts are provided by residues Gly-32–His-34, Asp-52, Phe-78, Asp-99, and Gln-106.

The protein belongs to the methyltransferase superfamily. RsmH family.

It localises to the cytoplasm. The enzyme catalyses cytidine(1402) in 16S rRNA + S-adenosyl-L-methionine = N(4)-methylcytidine(1402) in 16S rRNA + S-adenosyl-L-homocysteine + H(+). Specifically methylates the N4 position of cytidine in position 1402 (C1402) of 16S rRNA. The sequence is that of Ribosomal RNA small subunit methyltransferase H from Acinetobacter baumannii (strain AB0057).